A 75-amino-acid chain; its full sequence is Exodeoxyribonuclease 7 small subunit (75 aa).

This sequence belongs to the XseB family. As to quaternary structure, heterooligomer composed of large and small subunits.

The protein localises to the cytoplasm. It catalyses the reaction Exonucleolytic cleavage in either 5'- to 3'- or 3'- to 5'-direction to yield nucleoside 5'-phosphates.. Functionally, bidirectionally degrades single-stranded DNA into large acid-insoluble oligonucleotides, which are then degraded further into small acid-soluble oligonucleotides. The sequence is that of Exodeoxyribonuclease 7 small subunit from Listeria welshimeri serovar 6b (strain ATCC 35897 / DSM 20650 / CCUG 15529 / CIP 8149 / NCTC 11857 / SLCC 5334 / V8).